Here is a 147-residue protein sequence, read N- to C-terminus: Hordoindoline-B2 (147 aa).

An N-terminal signal peptide occupies residues 1–19 (MKTLFLLALLALVASTTSA). Positions 20–28 (QYSVGGGYN) are excised as a propeptide.

Five disulfide bonds are present. As to expression, found in endosperm and aleurone layer of developing kernels, but not in the embryo.

The protein localises to the membrane. It localises to the secreted. It is found in the extracellular space. Its function is as follows. Acts as a membranotoxin, probably through its antibacterial and antifungal activities, contributing to the defense mechanism of the plant against predators. Forms monovalent cation-selective ion channels in membranes. Contributes to grain texture and hardness. The sequence is that of Hordoindoline-B2 (HINB-2) from Hordeum vulgare (Barley).